The primary structure comprises 304 residues: Putative S-adenosyl-L-methionine-dependent methyltransferase MMAR_1057 (304 aa).

S-adenosyl-L-methionine contacts are provided by residues D130 and 159–160; that span reads DL.

This sequence belongs to the UPF0677 family.

Functionally, exhibits S-adenosyl-L-methionine-dependent methyltransferase activity. The protein is Putative S-adenosyl-L-methionine-dependent methyltransferase MMAR_1057 of Mycobacterium marinum (strain ATCC BAA-535 / M).